Consider the following 590-residue polypeptide: Aspartate--tRNA(Asp/Asn) ligase (590 aa).

Glutamate 176 is a binding site for L-aspartate. The tract at residues 200–203 (QLFK) is aspartate. Residues arginine 222 and histidine 451 each coordinate L-aspartate. Residue 222-224 (RDE) participates in ATP binding. ATP is bound at residue glutamate 485. Arginine 492 is an L-aspartate binding site. 537–540 (GIDR) contributes to the ATP binding site.

Belongs to the class-II aminoacyl-tRNA synthetase family. Type 1 subfamily. In terms of assembly, homodimer.

The protein localises to the cytoplasm. It carries out the reaction tRNA(Asx) + L-aspartate + ATP = L-aspartyl-tRNA(Asx) + AMP + diphosphate. Functionally, aspartyl-tRNA synthetase with relaxed tRNA specificity since it is able to aspartylate not only its cognate tRNA(Asp) but also tRNA(Asn). Reaction proceeds in two steps: L-aspartate is first activated by ATP to form Asp-AMP and then transferred to the acceptor end of tRNA(Asp/Asn). The protein is Aspartate--tRNA(Asp/Asn) ligase of Ehrlichia ruminantium (strain Gardel).